The primary structure comprises 468 residues: Monocarboxylate transporter 6 (468 aa).

Residues 1 to 13 (MARALEQADGRWA) are Cytoplasmic-facing. A helical transmembrane segment spans residues 14–34 (WVVLLSSLVTQALTLGFPTCI). Topologically, residues 35–53 (GVFFTDLQRDFQASNSETS) are extracellular. The helical transmembrane segment at 54-74 (WFPSILGAMVHGGGPLCSILV) threads the bilayer. The Cytoplasmic segment spans residues 75–80 (KHFGCR). The helical transmembrane segment at 81 to 101 (VTMMLGGVLASLGMVVSTFSG) threads the bilayer. Residue S102 is a topological domain, extracellular. A helical membrane pass occupies residues 103-122 (LTHLFLTAGVITGLGMCFSF). Residues 123–138 (QSSITVVGLYFVRRRP) lie on the Cytoplasmic side of the membrane. A helical transmembrane segment spans residues 139-159 (LANALASMGLSMGVTLWPLLA). Residues 160–171 (RYLLETLGWRGA) are Extracellular-facing. The chain crosses the membrane as a helical span at residues 172 to 192 (FLIFGGILLHCCVCGALLRPV). At 193–239 (ATNEVPEPKEDPLLPPKIPTRSCLATCVSTIRYHLAFDILRHNMGFC) the chain is on the cytoplasmic side. A helical transmembrane segment spans residues 240–260 (IYVTGVTWMNLGFALPHIFLV). The Extracellular portion of the chain corresponds to 261-274 (PYAMHHGVDDYWAA). A helical transmembrane segment spans residues 275 to 295 (MLMSIVGFCNIFLRPMAGLLL). The Cytoplasmic portion of the chain corresponds to 296 to 306 (AGRKSLAAYRK). The chain crosses the membrane as a helical span at residues 307-327 (YLFAVAILINGLTNLICTVSA). Residues 328–330 (DFR) lie on the Extracellular side of the membrane. Residues 331-351 (VLLGYCLVYSLSMCGVGILVF) form a helical membrane-spanning segment. Residues 352–368 (QVLMDIVPMDRFPSALG) lie on the Cytoplasmic side of the membrane. Residues 369-389 (LFTILCGVTSLISPPLAGLLL) form a helical membrane-spanning segment. Over 390–396 (DKTNNFS) the chain is Extracellular. A helical membrane pass occupies residues 397–417 (YVFYMSSGFLVSGSLILGVGF). The Cytoplasmic segment spans residues 418 to 468 (YAAEKKKLKQDGQAKMENATSEMTPMHDLTSEDKDSAKKQPYPESIYMTNV). The disordered stretch occupies residues 429–468 (GQAKMENATSEMTPMHDLTSEDKDSAKKQPYPESIYMTNV). Over residues 446–455 (LTSEDKDSAK) the composition is skewed to basic and acidic residues.

This sequence belongs to the major facilitator superfamily. Monocarboxylate porter (TC 2.A.1.13) family.

Its subcellular location is the cell membrane. Functionally, proton-linked monocarboxylate transporter. Catalyzes the rapid transport across the plasma membrane of many monocarboxylates such as lactate, pyruvate, branched-chain oxo acids derived from leucine, valine and isoleucine, and the ketone bodies acetoacetate, beta-hydroxybutyrate and acetate. The protein is Monocarboxylate transporter 6 (Slc16a5) of Mus musculus (Mouse).